The following is a 169-amino-acid chain: Nucleoside diphosphate kinase 3 (169 aa).

ADP-binding residues include lysine 29, arginine 105, threonine 111, arginine 122, valine 129, and asparagine 132. The active-site Pros-phosphohistidine intermediate is histidine 135.

It belongs to the NDK family. Homohexamer. Mg(2+) is required as a cofactor.

Its subcellular location is the mitochondrion outer membrane. The protein localises to the cytoplasm. It is found in the cytoskeleton. The protein resides in the cilium basal body. It carries out the reaction a 2'-deoxyribonucleoside 5'-diphosphate + ATP = a 2'-deoxyribonucleoside 5'-triphosphate + ADP. It catalyses the reaction a ribonucleoside 5'-diphosphate + ATP = a ribonucleoside 5'-triphosphate + ADP. Functionally, catalyzes the phosphorylation of ribonucleosides and deoxyribonucleoside diphosphates, other than ATP, into the corresponding triphosphates with ATP as the major phosphate donor. The ATP gamma phosphate is transferred to the nucleoside diphosphate beta phosphate via a ping-pong mechanism, using a phosphorylated active-site intermediate. Through the catalyzed exchange of gamma-phosphate between di- and triphosphonucleosides participates in regulation of intracellular nucleotide homeostasis. Required for ciliary function during renal development. In terms of biological role, independently of its kinase activity, facilitates mitochondrial tethering prior to membrane fusion through its direct membrane-binding and hexamerization. Implicated in repair of both single- and double-stranded breaks in DNA, independently of its kinase activity. In Danio rerio (Zebrafish), this protein is Nucleoside diphosphate kinase 3.